The primary structure comprises 154 residues: Large ribosomal subunit protein uL23 (154 aa).

Belongs to the universal ribosomal protein uL23 family.

In terms of biological role, this protein binds to a specific region on the 26S rRNA. This Daucus carota (Wild carrot) protein is Large ribosomal subunit protein uL23 (RPL23A).